Reading from the N-terminus, the 247-residue chain is Homeobox protein BarH-like 1b (247 aa).

Disordered regions lie at residues 118–138 and 197–247; these read RGKL…GRRS and GGGL…SQEE. Positions 135–194 form a DNA-binding region, homeobox; it reads GRRSRTVFTELQLMGLEKRFEKQKYLSTPDRIDLAESLGLSQLQVKTWYQNRRMKWKKIV. Positions 223–234 are enriched in basic and acidic residues; sequence EQERARDAEKPP.

This sequence belongs to the BAR homeobox family. As to quaternary structure, interacts with serum response factor (SRF). Expressed in smooth muscle cells of the upper digestive organs and their attached arteries and to craniofacial structures.

Its subcellular location is the nucleus. Its function is as follows. Transcription factor which is involved with the serum response factor (SRF) in the smooth muscle cell-specific transcription of the beta-tropomyosin gene in the upper digestive organs and their attached arteries. This chain is Homeobox protein BarH-like 1b (BARX1B), found in Gallus gallus (Chicken).